Consider the following 52-residue polypeptide: Large ribosomal subunit protein bL33 (52 aa).

It belongs to the bacterial ribosomal protein bL33 family.

In Chlamydia abortus (strain DSM 27085 / S26/3) (Chlamydophila abortus), this protein is Large ribosomal subunit protein bL33.